A 132-amino-acid chain; its full sequence is Agouti-signaling protein (132 aa).

An N-terminal signal peptide occupies residues 1–22; it reads MDVTRLVLATLLVFLCFFAAYS. Asn39 carries N-linked (GlcNAc...) asparagine glycosylation. The interval 60–93 is disordered; it reads KKISRKEAEKRRSSKKEASKQKVARPRTPLSVPC. Basic and acidic residues predominate over residues 64 to 79; it reads RKEAEKRRSSKKEASK. 5 disulfides stabilise this stretch: Cys93-Cys108, Cys100-Cys114, Cys107-Cys125, Cys111-Cys132, and Cys116-Cys123. The region spanning 93 to 132 is the Agouti domain; that stretch reads CVSTRGSCKPPAPACCHPCASCQCRFFRSACSCRVLNVNC.

The protein localises to the secreted. In terms of biological role, involved in the regulation of melanogenesis. The binding of ASP to MC1R precludes alpha-MSH initiated signaling and thus blocks production of cAMP, leading to a down-regulation of eumelanogenesis (brown/black pigment) and thus increasing synthesis of pheomelanin (yellow/red pigment). This chain is Agouti-signaling protein (ASIP), found in Cebuella pygmaea (Pygmy marmoset).